We begin with the raw amino-acid sequence, 94 residues long: Small ribosomal subunit protein bS18 (94 aa).

It belongs to the bacterial ribosomal protein bS18 family. Part of the 30S ribosomal subunit. Forms a tight heterodimer with protein bS6.

Its function is as follows. Binds as a heterodimer with protein bS6 to the central domain of the 16S rRNA, where it helps stabilize the platform of the 30S subunit. In Polaromonas naphthalenivorans (strain CJ2), this protein is Small ribosomal subunit protein bS18.